We begin with the raw amino-acid sequence, 518 residues long: UDP-N-acetylmuramate--L-alanine ligase (518 aa).

Residue 158–164 (GTHGKTT) participates in ATP binding.

It belongs to the MurCDEF family.

It localises to the cytoplasm. It catalyses the reaction UDP-N-acetyl-alpha-D-muramate + L-alanine + ATP = UDP-N-acetyl-alpha-D-muramoyl-L-alanine + ADP + phosphate + H(+). It participates in cell wall biogenesis; peptidoglycan biosynthesis. Cell wall formation. The sequence is that of UDP-N-acetylmuramate--L-alanine ligase from Crocosphaera subtropica (strain ATCC 51142 / BH68) (Cyanothece sp. (strain ATCC 51142)).